We begin with the raw amino-acid sequence, 687 residues long: Leucine-rich repeat and fibronectin type III domain-containing protein 1-like protein (687 aa).

The signal sequence occupies residues 1–17; it reads MEWLIFSLLLLAVSASG. The LRRNT domain occupies 18-51; that stretch reads QLCPKRCMCQNLSPSLAILCAKTGLLFVPTVIDR. Topologically, residues 18–527 are extracellular; it reads QLCPKRCMCQ…LRSHFLGGTM (510 aa). LRR repeat units lie at residues 52–73, 76–97, 100–121, 124–145, 149–170, 173–194, and 197–218; these read RTVE…DFAN, SLLH…TFAD, RLRA…HFRG, NLRH…AFDD, TLED…TIGR, NVNT…IFSN, and KLAR…PLFL. Asn73 carries N-linked (GlcNAc...) asparagine glycosylation. An LRRCT domain is found at 241–287; it reads NPLHCNCELLWLRRLTREDDLETCASPPDLTAKYFWTIPEEEFICDP. An Ig-like domain is found at 287 to 376; the sequence is PPVITRKSPK…STGTVELVVS (90 aa). A disulfide bridge connects residues Cys309 and Cys358. N-linked (GlcNAc...) asparagine glycosylation is found at Asn331, Asn340, Asn346, Asn383, Asn410, and Asn450. Positions 384–412 are disordered; it reads STNRIREPDPGPSDILTSAKSTSSVSNET. The segment covering 398–412 has biased composition (polar residues); it reads ILTSAKSTSSVSNET. The region spanning 415 to 510 is the Fibronectin type-III domain; the sequence is QERKVVLAEL…VGCVTFVTET (96 aa). A helical transmembrane segment spans residues 528–548; the sequence is IIIIGGIIVASVLVFIIILMI. The Cytoplasmic segment spans residues 549-687; that stretch reads RYKVYSQHGA…AQRDWSDFKI (139 aa). Disordered regions lie at residues 563-601 and 630-687; these read GTAM…GSLG and EDIV…DFKI. 2 stretches are compositionally biased toward polar residues: residues 565–576 and 657–672; these read AMTNVRSQTNGG and EGTS…SPQV. The segment covering 673–687 has biased composition (basic and acidic residues); the sequence is SDEKKAQRDWSDFKI.

This sequence belongs to the LRFN family.

It localises to the membrane. The protein localises to the synapse. In terms of biological role, may be involved in the regulation of excitatory synapses. The protein is Leucine-rich repeat and fibronectin type III domain-containing protein 1-like protein (lrfn1l) of Danio rerio (Zebrafish).